Here is a 354-residue protein sequence, read N- to C-terminus: Chorismate synthase (354 aa).

R46 lines the NADP(+) pocket. FMN-binding positions include 123–125 (RSS), 239–240 (NA), G284, 299–303 (KPVAT), and R325.

Belongs to the chorismate synthase family. As to quaternary structure, homotetramer. It depends on FMNH2 as a cofactor.

It carries out the reaction 5-O-(1-carboxyvinyl)-3-phosphoshikimate = chorismate + phosphate. It functions in the pathway metabolic intermediate biosynthesis; chorismate biosynthesis; chorismate from D-erythrose 4-phosphate and phosphoenolpyruvate: step 7/7. Functionally, catalyzes the anti-1,4-elimination of the C-3 phosphate and the C-6 proR hydrogen from 5-enolpyruvylshikimate-3-phosphate (EPSP) to yield chorismate, which is the branch point compound that serves as the starting substrate for the three terminal pathways of aromatic amino acid biosynthesis. This reaction introduces a second double bond into the aromatic ring system. The protein is Chorismate synthase of Azobacteroides pseudotrichonymphae genomovar. CFP2.